The sequence spans 126 residues: Late histone H2A.L3 (126 aa).

Positions 1–20 are disordered; the sequence is MSGRGKGAGKARAKAKSRSA. At serine 2 the chain carries N-acetylserine. Serine 2 carries the phosphoserine modification. Basic residues predominate over residues 7-19; that stretch reads GAGKARAKAKSRS. Glutamine 105 bears the N5-methylglutamine mark. Residue lysine 120 forms a Glycyl lysine isopeptide (Lys-Gly) (interchain with G-Cter in ubiquitin) linkage.

Belongs to the histone H2A family. In terms of assembly, the nucleosome is a histone octamer containing two molecules each of H2A, H2B, H3 and H4 assembled in one H3-H4 heterotetramer and two H2A-H2B heterodimers. The octamer wraps approximately 147 bp of DNA. Post-translationally, monoubiquitination of Lys-120 gives a specific tag for epigenetic transcriptional repression. Phosphorylation of Ser-2 directly represses transcription.

The protein localises to the nucleus. It localises to the chromosome. Core component of nucleosome. Nucleosomes wrap and compact DNA into chromatin, limiting DNA accessibility to the cellular machineries which require DNA as a template. Histones thereby play a central role in transcription regulation, DNA repair, DNA replication and chromosomal stability. DNA accessibility is regulated via a complex set of post-translational modifications of histones, also called histone code, and nucleosome remodeling. In Strongylocentrotus purpuratus (Purple sea urchin), this protein is Late histone H2A.L3.